The following is a 154-amino-acid chain: Ubiquitin-conjugating enzyme E2 L3 (154 aa).

A UBC core domain is found at 2–149 (AASRRLMKEL…AEEFTKKYGE (148 aa)). Catalysis depends on cysteine 86, which acts as the Glycyl thioester intermediate. Position 131 is an N6-acetyllysine (lysine 131).

The protein belongs to the ubiquitin-conjugating enzyme family. As to quaternary structure, interacts with PRKN; involved in ubiquitination and degradation of misfolded proteins. Interacts with UBE3A. Interacts with CCNB1IP1, CBL, ZAP70, RNF19A, RNF19B and RNF144B. Interacts with ARIH1. Interacts with ARIH2 (via RING-type 1). Interacts with NCOA1; they functionally interact to regulate progesterone receptor transcriptional activity. Interacts with NDFIP1 (via N-terminus); the interaction mediates recruitment of UBE2L3 to ITCH and causes MAP3K7 ubiquitination. Post-translationally, ubiquitinated. The alteration of UBE2L3 protein levels during the S-phase of the cell cycle is due to ubiquitin-dependent proteasomal degradation. Autoubiquitinated in vitro.

It localises to the nucleus. Its subcellular location is the cytoplasm. It carries out the reaction S-ubiquitinyl-[E1 ubiquitin-activating enzyme]-L-cysteine + [E2 ubiquitin-conjugating enzyme]-L-cysteine = [E1 ubiquitin-activating enzyme]-L-cysteine + S-ubiquitinyl-[E2 ubiquitin-conjugating enzyme]-L-cysteine.. The protein operates within protein modification; protein ubiquitination. Functionally, ubiquitin-conjugating enzyme E2 that specifically acts with HECT-type and RBR family E3 ubiquitin-protein ligases. Does not function with most RING-containing E3 ubiquitin-protein ligases because it lacks intrinsic E3-independent reactivity with lysine: in contrast, it has activity with the RBR family E3 enzymes, such as PRKN, RNF31 and ARIH1, that function like RING-HECT hybrids. Accepts ubiquitin from the E1 complex and catalyzes its covalent attachment to other proteins. Mediates ubiquitination by the CUL9-RBX1 complex. In vitro catalyzes 'Lys-11'-linked polyubiquitination. Involved in the selective degradation of short-lived and abnormal proteins. Down-regulated during the S-phase it is involved in progression through the cell cycle. Regulates nuclear hormone receptors transcriptional activity. May play a role in myelopoiesis. The polypeptide is Ubiquitin-conjugating enzyme E2 L3 (UBE2L3) (Pongo abelii (Sumatran orangutan)).